The chain runs to 456 residues: Enolase (456 aa).

Glutamine 167 provides a ligand contact to (2R)-2-phosphoglycerate. Glutamate 209 functions as the Proton donor in the catalytic mechanism. Mg(2+) contacts are provided by aspartate 250, glutamate 312, and aspartate 339. (2R)-2-phosphoglycerate contacts are provided by lysine 364, arginine 393, serine 394, and lysine 415. Lysine 364 acts as the Proton acceptor in catalysis.

The protein belongs to the enolase family. It depends on Mg(2+) as a cofactor.

The protein resides in the cytoplasm. It is found in the secreted. The protein localises to the cell surface. It carries out the reaction (2R)-2-phosphoglycerate = phosphoenolpyruvate + H2O. It participates in carbohydrate degradation; glycolysis; pyruvate from D-glyceraldehyde 3-phosphate: step 4/5. Functionally, catalyzes the reversible conversion of 2-phosphoglycerate (2-PG) into phosphoenolpyruvate (PEP). It is essential for the degradation of carbohydrates via glycolysis. This Mycoplasmopsis pulmonis (strain UAB CTIP) (Mycoplasma pulmonis) protein is Enolase.